The chain runs to 261 residues: Aquaporin-8 (261 aa).

Over 1–36 the chain is Cytoplasmic; the sequence is MSGETPMCSIDLSEVKAKETRMAGRFRVSWYEQYIQ. A helical membrane pass occupies residues 37–57; sequence PCVVELLGSALFIFIGCLSVI. C53 carries the post-translational modification Cysteine persulfide. C53 carries the cysteine sulfenic acid (-SOH) modification. Residues 58–84 are Extracellular-facing; it reads ENSPDTGLLQPALAHGLALGLIIATLG. The chain crosses the membrane as a helical span at residues 85–105; sequence NISGGHFNPAVSLAVTVIGGL. The NPA 1 signature appears at 92–94; sequence NPA. At 106–107 the chain is on the cytoplasmic side; the sequence is KT. The helical transmembrane segment at 108-128 threads the bilayer; the sequence is MLLIPYWISQIFGGLIGAALA. Residues 129 to 156 are Extracellular-facing; the sequence is KVVSPEERFWNASGAAFAIVQEQEQVTE. A glycan (N-linked (GlcNAc...) asparagine) is linked at N139. A helical transmembrane segment spans residues 157-177; it reads ALGVEIILTILLVLAVCMGAV. Residues 178 to 183 lie on the Cytoplasmic side of the membrane; sequence NEKTMG. Residues 184–204 traverse the membrane as a helical segment; that stretch reads PLAPFSIGFSVIVDILAGGGI. Residues 205–228 are Extracellular-facing; it reads SGACMNPARAFGPAVVAGYWDFHW. Residues 210-212 carry the NPA 2 motif; the sequence is NPA. The helical transmembrane segment at 229–249 threads the bilayer; sequence IYWLGPLLAGLFVGLLIRLFI. Topologically, residues 250–261 are cytoplasmic; sequence GDEKTRLILKSR.

Belongs to the MIP/aquaporin (TC 1.A.8) family. Sulfenylation at Cys-53(C53-SOH) when hydrogen peroxide flows through the AQP8 channel, making it susceptible to hydrogen sulfide produced by CBS. Post-translationally, persulfidation at Cys-53 is required to gate AQP8 channel; under stress condition, hydrogen peroxide accumulates in the cell leading to CBS activation that produces hydrogen sulfide inducing persulfidation of oxidized Cys-53 (C53-SOH). In terms of processing, N-glycosylated.

Its subcellular location is the cell membrane. The protein localises to the mitochondrion inner membrane. It localises to the apical cell membrane. The protein resides in the basolateral cell membrane. It is found in the smooth endoplasmic reticulum membrane. It catalyses the reaction H2O(in) = H2O(out). The enzyme catalyses H2O2(out) = H2O2(in). It carries out the reaction formamide(out) = formamide(in). The catalysed reaction is methylamine(out) = methylamine(in). Reversibly gated by a two-step sulfenylation-persulfidation process in cells undergoing diverse stresses. Functionally, channel that allows the facilitated permeation of water and uncharged molecules, such as hydrogen peroxide and the neutral form of ammonia (NH3), through cellular membranes such as plasma membrane, inner mitochondrial membrane and endoplasmic reticulum membrane of several tissues. The transport of ammonia neutral form induces a parallel transport of proton, at alkaline pH when the concentration of ammonia is high. However, it is unclear whether the transport of proton takes place via the aquaporin or via an endogenous pathway. Also, may transport ammonia analogs such as formamide and methylamine, a transport favourited at basic pH due to the increase of unprotonated (neutral) form, which is expected to favor diffusion. Does not transport urea or glycerol. The water transport mechanism is mercury- and copper-sensitive and passive in response to osmotic driving forces. At the canicular plasma membrane, mediates the osmotic transport of water toward the bile canaliculus and facilitates the cAMP-induced bile canalicular water secretion, a process involved in bile formation. In addition, mediates the hydrogen peroxide release from hepatocyte mitochondria that modulates the SREBF2-mediated cholesterol synthesis and facilitates the mitochondrial ammonia uptake which is metabolized into urea, mainly under glucagon stimulation. In B cells, transports the CYBB-generated hydrogen peroxide from the external leaflet of the plasma membrane to the cytosol to promote B cell activation and differentiation for signal amplification. In the small intestine and colon system, mediates water transport through mitochondria and apical membrane of epithelial cells. May play an important role in the adaptive response of proximal tubule cells to acidosis possibly facilitating mitochondrial ammonia transport. This Notomys alexis (Spinifex hopping mouse) protein is Aquaporin-8.